Consider the following 207-residue polypeptide: MPKVALLNQTGTQVGDIELADAVFGIEPNEAVVYDAIVMQQASRRQGTHDTKGRSEVRGGGRKPWKQKGTGRARQGSIRSPQWVGGGTVFGPTPRSYAYKLPKKVRRLALRSALSSKVANNEFIVLEGLTIDAPKTKDMISVFAALSIERKVLVVTADYNETVVLSTRNIPGVTVVDAAGVNVLDLVAHDKVIFTKDAVARVEEVLA.

The disordered stretch occupies residues 43-85 (SRRQGTHDTKGRSEVRGGGRKPWKQKGTGRARQGSIRSPQWVG). Residues 47–59 (GTHDTKGRSEVRG) show a composition bias toward basic and acidic residues. The segment covering 60-71 (GGRKPWKQKGTG) has biased composition (basic residues).

Belongs to the universal ribosomal protein uL4 family. In terms of assembly, part of the 50S ribosomal subunit.

Functionally, one of the primary rRNA binding proteins, this protein initially binds near the 5'-end of the 23S rRNA. It is important during the early stages of 50S assembly. It makes multiple contacts with different domains of the 23S rRNA in the assembled 50S subunit and ribosome. Its function is as follows. Forms part of the polypeptide exit tunnel. This is Large ribosomal subunit protein uL4 from Exiguobacterium sibiricum (strain DSM 17290 / CCUG 55495 / CIP 109462 / JCM 13490 / 255-15).